The sequence spans 227 residues: Phosphoglycolate phosphatase (227 aa).

The active-site Nucleophile is the aspartate 8. Residues aspartate 8 and aspartate 10 each contribute to the Mg(2+) site. Lysine 152 is a binding site for substrate. Aspartate 175 and aspartate 179 together coordinate Mg(2+).

Belongs to the archaeal SPP-like hydrolase family. The cofactor is Mg(2+).

It carries out the reaction 2-phosphoglycolate + H2O = glycolate + phosphate. Functionally, catalyzes the dephosphorylation of 2-phosphoglycolate. The sequence is that of Phosphoglycolate phosphatase from Halorubrum lacusprofundi (strain ATCC 49239 / DSM 5036 / JCM 8891 / ACAM 34).